The sequence spans 341 residues: tRNA N6-adenosine threonylcarbamoyltransferase (341 aa).

2 residues coordinate Fe cation: H117 and H121. Substrate contacts are provided by residues 140–144 (VVSGG), D173, G186, and N278. D306 lines the Fe cation pocket.

It belongs to the KAE1 / TsaD family. Fe(2+) is required as a cofactor.

The protein resides in the cytoplasm. The catalysed reaction is L-threonylcarbamoyladenylate + adenosine(37) in tRNA = N(6)-L-threonylcarbamoyladenosine(37) in tRNA + AMP + H(+). In terms of biological role, required for the formation of a threonylcarbamoyl group on adenosine at position 37 (t(6)A37) in tRNAs that read codons beginning with adenine. Is involved in the transfer of the threonylcarbamoyl moiety of threonylcarbamoyl-AMP (TC-AMP) to the N6 group of A37, together with TsaE and TsaB. TsaD likely plays a direct catalytic role in this reaction. The polypeptide is tRNA N6-adenosine threonylcarbamoyltransferase (Symbiobacterium thermophilum (strain DSM 24528 / JCM 14929 / IAM 14863 / T)).